The primary structure comprises 734 residues: DNA-binding protein RFX2 (734 aa).

Polar residues predominate over residues 1–23 (MQRSEGGSETPSTVALRTSTSAQ). Residues 1–31 (MQRSEGGSETPSTVALRTSTSAQAPVVQPVP) are disordered. A DNA-binding region (RFX-type winged-helix) is located at residues 204–279 (HLQWLLDNYE…YHYYGIRLKP (76 aa)). Residues 694–722 (DTSFSDDMTSDGDMSRMSERSLTEPAVKR) are disordered. Basic and acidic residues predominate over residues 706–722 (DMSRMSERSLTEPAVKR).

It belongs to the RFX family. As to quaternary structure, homodimer. Heterodimer; heterodimerizes with other rfx proteins.

It localises to the nucleus. The protein localises to the cytoplasm. In terms of biological role, transcription factor that acts as a key regulator of ciliogenesis. Specifically regulates expression of genes required for cilium assembly and function. Recognizes and binds the X-box, a regulatory motif with DNA sequence 5'-GTNRCC(0-3N)RGYAAC-3' present on promoters. This Danio rerio (Zebrafish) protein is DNA-binding protein RFX2 (rfx2).